A 343-amino-acid polypeptide reads, in one-letter code: MQIGNFNTDKKVFIIAELSANHAGSLEMALKSIKAAKKAGADAIKIQTYTPDSLTLNSDKEDFIIKGGLWDKRKLYELYESAKTPYEWHSQIFETAQNEGILCFSSPFAKEDIEFLKRFDPIAYKIASFEANDENFVRLIAKEKKPTIVSTGIATEEELFKICEIFKEEKNPDLIFLKCTSAYPTAIEDMNLKGIVSLKEKFNVEVGLSDHSFGFLAPVMAVALGARVIEKHFMLDKSIESEDSKFSLDFDEFKAMVDAVRQAESALGDGKLDLDEKALKNRVFARSLYASKDIKKGEIFSEENVKSVRPSFGLHPKFYQELLGKKASKDIEFGDALKESDFR.

Residues 287-343 (SLYASKDIKKGEIFSEENVKSVRPSFGLHPKFYQELLGKKASKDIEFGDALKESDFR) enclose the AFP-like domain.

The protein belongs to the pseudaminic acid synthase family. A divalent metal cation is required as a cofactor.

It catalyses the reaction 2,4-diacetamido-2,4,6-trideoxy-beta-L-altrose + phosphoenolpyruvate + H2O = pseudaminate + phosphate. Catalyzes the fifth step in the biosynthesis of pseudaminic acid, a sialic-acid-like sugar that is used to modify flagellin. Catalyzes the condensation of phosphoenolpyruvate with 2,4-diacetamido-2,4,6-trideoxy-beta-l-altropyranose, forming pseudaminic acid. The sequence is that of Pseudaminic acid synthase (pseI) from Campylobacter jejuni subsp. jejuni serotype O:23/36 (strain 81-176).